The primary structure comprises 114 residues: Large ribosomal subunit protein bL21c (114 aa).

Belongs to the bacterial ribosomal protein bL21 family. Part of the 50S ribosomal subunit.

The protein resides in the plastid. Its subcellular location is the chloroplast. Functionally, this protein binds to 23S rRNA. In Staurastrum punctulatum (Green alga), this protein is Large ribosomal subunit protein bL21c.